Consider the following 404-residue polypeptide: Cysteine desulfurase IscS (404 aa).

Pyridoxal 5'-phosphate-binding positions include 75-76, asparagine 155, glutamine 183, and 203-205; these read AT and SAH. Lysine 206 is modified (N6-(pyridoxal phosphate)lysine). Residue threonine 243 coordinates pyridoxal 5'-phosphate. Catalysis depends on cysteine 328, which acts as the Cysteine persulfide intermediate. [2Fe-2S] cluster is bound at residue cysteine 328.

This sequence belongs to the class-V pyridoxal-phosphate-dependent aminotransferase family. NifS/IscS subfamily. Homodimer. Forms a heterotetramer with IscU, interacts with other sulfur acceptors. Pyridoxal 5'-phosphate serves as cofactor.

The protein resides in the cytoplasm. It carries out the reaction (sulfur carrier)-H + L-cysteine = (sulfur carrier)-SH + L-alanine. It functions in the pathway cofactor biosynthesis; iron-sulfur cluster biosynthesis. In terms of biological role, master enzyme that delivers sulfur to a number of partners involved in Fe-S cluster assembly, tRNA modification or cofactor biosynthesis. Catalyzes the removal of elemental sulfur atoms from cysteine to produce alanine. Functions as a sulfur delivery protein for Fe-S cluster synthesis onto IscU, an Fe-S scaffold assembly protein, as well as other S acceptor proteins. This is Cysteine desulfurase IscS from Shewanella piezotolerans (strain WP3 / JCM 13877).